Consider the following 548-residue polypeptide: Chaperonin GroEL (548 aa).

Residues 30-33, Lys-51, 87-91, Gly-415, 478-480, and Asp-494 each bind ATP; these read TLGP, DGTTT, and NAA.

It belongs to the chaperonin (HSP60) family. In terms of assembly, forms a cylinder of 14 subunits composed of two heptameric rings stacked back-to-back. Interacts with the co-chaperonin GroES.

The protein localises to the cytoplasm. The enzyme catalyses ATP + H2O + a folded polypeptide = ADP + phosphate + an unfolded polypeptide.. Functionally, together with its co-chaperonin GroES, plays an essential role in assisting protein folding. The GroEL-GroES system forms a nano-cage that allows encapsulation of the non-native substrate proteins and provides a physical environment optimized to promote and accelerate protein folding. This chain is Chaperonin GroEL, found in Trichlorobacter lovleyi (strain ATCC BAA-1151 / DSM 17278 / SZ) (Geobacter lovleyi).